A 477-amino-acid chain; its full sequence is Enolase 1, chloroplastic (477 aa).

The transit peptide at 1 to 41 directs the protein to the chloroplast; that stretch reads MALTTKPHHLQRSFLSPSRVSGERYLESAPSCLRFRRSGVQ. His-203 and Glu-212 together coordinate substrate. The active-site Proton donor is the Glu-255. Residues Asp-290, Glu-340, and Asp-365 each contribute to the Mg(2+) site. Substrate is bound by residues Glu-340 and Asp-365. Residue Lys-390 is the Proton acceptor of the active site. Residues 417–420 and Lys-441 contribute to the substrate site; that span reads SHRS. Ser-476 is modified (phosphoserine).

The protein belongs to the enolase family. The cofactor is Mg(2+). In terms of tissue distribution, highly expressed in young roots, young siliques, and shoot apex. Lowly expressed in young leaves, stems and cotyledons.

It is found in the plastid. The protein localises to the chloroplast. It carries out the reaction (2R)-2-phosphoglycerate = phosphoenolpyruvate + H2O. Its pathway is carbohydrate degradation; glycolysis; pyruvate from D-glyceraldehyde 3-phosphate: step 4/5. The polypeptide is Enolase 1, chloroplastic (ENO1) (Arabidopsis thaliana (Mouse-ear cress)).